A 288-amino-acid polypeptide reads, in one-letter code: Pyrroline-5-carboxylate reductase 3 (288 aa).

It belongs to the pyrroline-5-carboxylate reductase family. In terms of assembly, homodecamer; composed of 5 homodimers.

It is found in the cytoplasm. It carries out the reaction L-proline + NADP(+) = (S)-1-pyrroline-5-carboxylate + NADPH + 2 H(+). The catalysed reaction is L-proline + NAD(+) = (S)-1-pyrroline-5-carboxylate + NADH + 2 H(+). It functions in the pathway amino-acid biosynthesis; L-proline biosynthesis; L-proline from L-glutamate 5-semialdehyde: step 1/1. Functionally, oxidoreductase that catalyzes the last step in proline biosynthesis, which corresponds to the reduction of pyrroline-5-carboxylate (P5C) to L-proline using NAD(P)H. Proline is synthesized from either glutamate or ornithine; both are converted to P5C, and then to proline via pyrroline-5-carboxylate reductases (PYCRs). PYCR3 is exclusively linked to the biosynthesis of proline from ornithine. The protein is Pyrroline-5-carboxylate reductase 3 of Danio rerio (Zebrafish).